Reading from the N-terminus, the 295-residue chain is Nitrogenase iron protein 1 (295 aa).

13 to 20 (GKGGIGKS) contacts ATP. Cysteine 101 contacts [4Fe-4S] cluster. Arginine 104 carries the post-translational modification ADP-ribosylarginine; by dinitrogenase reductase ADP-ribosyltransferase. Cysteine 135 is a [4Fe-4S] cluster binding site.

The protein belongs to the NifH/BchL/ChlL family. Homodimer. [4Fe-4S] cluster is required as a cofactor. Post-translationally, the reversible ADP-ribosylation of Arg-104 inactivates the nitrogenase reductase and regulates nitrogenase activity.

The enzyme catalyses N2 + 8 reduced [2Fe-2S]-[ferredoxin] + 16 ATP + 16 H2O = H2 + 8 oxidized [2Fe-2S]-[ferredoxin] + 2 NH4(+) + 16 ADP + 16 phosphate + 6 H(+). The key enzymatic reactions in nitrogen fixation are catalyzed by the nitrogenase complex, which has 2 components: the iron protein and the molybdenum-iron protein. The chain is Nitrogenase iron protein 1 (nifH1) from Nostoc sp. (strain PCC 7120 / SAG 25.82 / UTEX 2576).